Reading from the N-terminus, the 537-residue chain is Glucans biosynthesis protein D 2 (537 aa).

Residues 1–28 constitute a signal peptide (tat-type signal); the sequence is MVTRRHLLASASLSATLAALGITPEALA.

The protein belongs to the OpgD/OpgG family. Predicted to be exported by the Tat system. The position of the signal peptide cleavage has not been experimentally proven.

Its subcellular location is the periplasm. It participates in glycan metabolism; osmoregulated periplasmic glucan (OPG) biosynthesis. Probably involved in the control of the structural glucose backbone of osmoregulated periplasmic glucans (OPGs). The protein is Glucans biosynthesis protein D 2 (opgD2) of Ralstonia nicotianae (strain ATCC BAA-1114 / GMI1000) (Ralstonia solanacearum).